Reading from the N-terminus, the 508-residue chain is Glycerol kinase (508 aa).

Thr15 contributes to the ADP binding site. The ATP site is built by Thr15, Ser16, and Ser17. Thr15 contacts sn-glycerol 3-phosphate. Residue Arg19 participates in ADP binding. Residues Arg85, Glu86, Tyr138, and Asp251 each contribute to the sn-glycerol 3-phosphate site. Glycerol-binding residues include Arg85, Glu86, Tyr138, Asp251, and Gln252. The ADP site is built by Thr273, Gly317, and Gly419. The ATP site is built by Thr273, Gly317, and Gly419.

This sequence belongs to the FGGY kinase family.

The catalysed reaction is glycerol + ATP = sn-glycerol 3-phosphate + ADP + H(+). Its pathway is polyol metabolism; glycerol degradation via glycerol kinase pathway; sn-glycerol 3-phosphate from glycerol: step 1/1. Its activity is regulated as follows. Inhibited by fructose 1,6-bisphosphate (FBP). Its function is as follows. Key enzyme in the regulation of glycerol uptake and metabolism. Catalyzes the phosphorylation of glycerol to yield sn-glycerol 3-phosphate. The sequence is that of Glycerol kinase from Mycoplasma pneumoniae (strain ATCC 29342 / M129 / Subtype 1) (Mycoplasmoides pneumoniae).